The chain runs to 633 residues: Putative oligopeptide transporter HI_0561 (633 aa).

15 helical membrane passes run 8-28, 45-65, 70-90, 128-148, 180-200, 230-250, 281-301, 311-331, 345-365, 379-399, 420-440, 483-503, 515-535, 564-584, and 604-624; these read GVTFASSIPAAVISMAVLKFF, SAGTLSSVIFVLPGLLMMGYW, FWQTMLICAAGGTLGVLFTIP, IAYGGVLAGLVAFLTNGLRVM, IGIVGGIAMLIGVILTWGVAV, IGVGTIGIAAIWTLLILMKPM, MIYILIATVALIVISLHHFIA, ILLVVVCTFLAVFIGFFVAAA, PISGIGIISVIVISLVLVSIG, FLTALTLFTASIVITTACISN, VALIIGCFVGALVIAPVLEIL, WTYILTGVGLGAVLITIDAFL, VIAVGIGIYLPPSINTPVIVG, LFSAGLIVGESLMGVILAFII, and WDTIGEWFGLIVFIVGIVIFA.

Belongs to the oligopeptide OPT transporter family.

Its subcellular location is the cell membrane. This is Putative oligopeptide transporter HI_0561 from Haemophilus influenzae (strain ATCC 51907 / DSM 11121 / KW20 / Rd).